A 239-amino-acid polypeptide reads, in one-letter code: ATP-dependent dethiobiotin synthetase BioD (239 aa).

Glutamate 15–phenylalanine 20 is an ATP binding site. Threonine 19 contributes to the Mg(2+) binding site. Residue lysine 40 is part of the active site. ATP is bound by residues aspartate 57, glutamate 118–glycine 121, and asparagine 178–histidine 179. Aspartate 57 and glutamate 118 together coordinate Mg(2+).

Belongs to the dethiobiotin synthetase family. Homodimer. Requires Mg(2+) as cofactor.

The protein resides in the cytoplasm. It carries out the reaction (7R,8S)-7,8-diammoniononanoate + CO2 + ATP = (4R,5S)-dethiobiotin + ADP + phosphate + 3 H(+). It participates in cofactor biosynthesis; biotin biosynthesis; biotin from 7,8-diaminononanoate: step 1/2. Catalyzes a mechanistically unusual reaction, the ATP-dependent insertion of CO2 between the N7 and N8 nitrogen atoms of 7,8-diaminopelargonic acid (DAPA, also called 7,8-diammoniononanoate) to form a ureido ring. The sequence is that of ATP-dependent dethiobiotin synthetase BioD from Burkholderia orbicola (strain MC0-3).